The sequence spans 418 residues: Gamma-glutamyl phosphate reductase (418 aa).

It belongs to the gamma-glutamyl phosphate reductase family.

It localises to the cytoplasm. It catalyses the reaction L-glutamate 5-semialdehyde + phosphate + NADP(+) = L-glutamyl 5-phosphate + NADPH + H(+). The protein operates within amino-acid biosynthesis; L-proline biosynthesis; L-glutamate 5-semialdehyde from L-glutamate: step 2/2. Its function is as follows. Catalyzes the NADPH-dependent reduction of L-glutamate 5-phosphate into L-glutamate 5-semialdehyde and phosphate. The product spontaneously undergoes cyclization to form 1-pyrroline-5-carboxylate. This is Gamma-glutamyl phosphate reductase from Geobacter sp. (strain M21).